Reading from the N-terminus, the 224-residue chain is ATP-dependent dethiobiotin synthetase BioD (224 aa).

Residue 14–19 participates in ATP binding; it reads GIGKTV. T18 lines the Mg(2+) pocket. The active site involves K39. S43 contacts substrate. ATP is bound by residues D56, 117–120, and 177–178; these read EGVG and NE. Mg(2+)-binding residues include D56 and E117.

Belongs to the dethiobiotin synthetase family. As to quaternary structure, homodimer. Mg(2+) is required as a cofactor.

Its subcellular location is the cytoplasm. It catalyses the reaction (7R,8S)-7,8-diammoniononanoate + CO2 + ATP = (4R,5S)-dethiobiotin + ADP + phosphate + 3 H(+). Its pathway is cofactor biosynthesis; biotin biosynthesis; biotin from 7,8-diaminononanoate: step 1/2. Catalyzes a mechanistically unusual reaction, the ATP-dependent insertion of CO2 between the N7 and N8 nitrogen atoms of 7,8-diaminopelargonic acid (DAPA, also called 7,8-diammoniononanoate) to form a ureido ring. This chain is ATP-dependent dethiobiotin synthetase BioD, found in Xanthomonas campestris pv. campestris (strain 8004).